The following is a 208-amino-acid chain: uncharacterized protein (208 aa).

The N-terminal stretch at 1–16 is a signal peptide; the sequence is MKFLLIACLAVPAILA. Asn-79 carries N-linked (GlcNAc...) asparagine glycosylation.

This is an uncharacterized protein from Caenorhabditis elegans.